The following is a 1537-amino-acid chain: Leucine-rich repeat-containing protein 7 (1537 aa).

LRR repeat units lie at residues Ile-23 to Phe-44, Thr-47 to Cys-68, Ala-70 to Leu-91, Asn-93 to Cys-114, Cys-116 to Leu-137, Asn-139 to Val-161, Lys-162 to Leu-183, Gln-185 to Ile-206, Asn-208 to Leu-229, Met-231 to Glu-253, Ala-254 to Leu-275, Lys-277 to Leu-298, Leu-300 to Leu-321, Ser-323 to Cys-344, Asn-346 to Met-367, Lys-369 to Lys-391, and Glu-392 to Ala-413. A phosphoserine mark is found at Ser-439, Ser-441, and Ser-443. Over residues Lys-663–His-676 the composition is skewed to basic and acidic residues. Disordered regions lie at residues Lys-663–Leu-709, Phe-730–Pro-759, Ala-786–Leu-810, and Glu-824–Val-892. Over residues Cys-677–Leu-709 the composition is skewed to polar residues. The segment covering Asn-790 to Ser-804 has biased composition (low complexity). Position 831 is a phosphothreonine (Thr-831). Ser-850 is modified (phosphoserine). Residues Pro-859 to Leu-871 show a composition bias toward low complexity. A Phosphothreonine modification is found at Thr-865. Ser-869 bears the Phosphoserine mark. A compositionally biased stretch (basic and acidic residues) spans Pro-872 to Thr-882. A phosphoserine mark is found at Ser-947, Ser-949, and Ser-1118. The interval Glu-1136–Thr-1159 is disordered. An Omega-N-methylarginine modification is found at Arg-1149. The residue at position 1233 (Ser-1233) is a Phosphoserine. Disordered regions lie at residues Asp-1234–Lys-1265 and Gln-1331–Gly-1360. The span at Lys-1243 to Cys-1263 shows a compositional bias: basic and acidic residues. A compositionally biased stretch (polar residues) spans Lys-1332–Trp-1354. Phosphoserine occurs at positions 1335 and 1439. A PDZ domain is found at Glu-1445–Leu-1535.

This sequence belongs to the LAP (LRR and PDZ) protein family. In terms of assembly, interacts with CNKSR2 and DLG4. Interacts with CTNND2/Catenin delta-2. Forms a complex with N-cadherin through CTNND2. Interacts with CAMK2A. Brain-specific. Isoform 3 is ubiquitously expressed.

The protein resides in the cytoplasm. Its subcellular location is the postsynaptic density. Functionally, required for normal synaptic spine architecture and function. Necessary for DISC1 and GRM5 localization to postsynaptic density complexes and for both N-methyl D-aspartate receptor-dependent and metabotropic glutamate receptor-dependent long term depression. The sequence is that of Leucine-rich repeat-containing protein 7 (LRRC7) from Homo sapiens (Human).